The primary structure comprises 309 residues: Isoflavone reductase homolog IRL (309 aa).

Residues 12 to 18, Arg-37, and Lys-46 each bind NADP(+); that span reads GGTGYLG. Lys-134 acts as the Proton acceptor in catalysis. Residue Arg-138 coordinates NADP(+).

This sequence belongs to the NmrA-type oxidoreductase family. Isoflavone reductase subfamily. Monomer.

It localises to the cytoplasm. The protein operates within alkaloid biosynthesis. In terms of biological role, reductase that may be involved in a late step of alkaloid biosynthesis. This Zea mays (Maize) protein is Isoflavone reductase homolog IRL.